We begin with the raw amino-acid sequence, 342 residues long: MTIALTGGGTGGHLAIVRCLLESAIKKNIECVYIGSQNGQDKAWFENEVRFKEKFFLSSKGVVNQSKFDKISSLLHTLKLSKDCREIFKKYHIQAVFSVGGYSAAPASFAALFSHLPLFIHEQNSKSGSLNMLLKPFATKFFSAFEKEISPYPVADKFFDNARIRKELKNIIFLGGSQGAQFINELALNLAPKLQEQNIKIIHQCGKNDFEKCKKHYQSLNIQADIFDFSLNLEEKMKNADLAISRAGASTLFELCANTLPAIFIPYPYAAKNHQYFNAKFLQDQALCQIFMQNSINLDEFFKSILKLNLENISTRLQNITQKNGADMLIQKALFDNLTFIR.

Residues T10–G12, N124, S177, and Q275 contribute to the UDP-N-acetyl-alpha-D-glucosamine site.

The protein belongs to the glycosyltransferase 28 family. MurG subfamily.

Its subcellular location is the cell inner membrane. The enzyme catalyses di-trans,octa-cis-undecaprenyl diphospho-N-acetyl-alpha-D-muramoyl-L-alanyl-D-glutamyl-meso-2,6-diaminopimeloyl-D-alanyl-D-alanine + UDP-N-acetyl-alpha-D-glucosamine = di-trans,octa-cis-undecaprenyl diphospho-[N-acetyl-alpha-D-glucosaminyl-(1-&gt;4)]-N-acetyl-alpha-D-muramoyl-L-alanyl-D-glutamyl-meso-2,6-diaminopimeloyl-D-alanyl-D-alanine + UDP + H(+). It participates in cell wall biogenesis; peptidoglycan biosynthesis. Cell wall formation. Catalyzes the transfer of a GlcNAc subunit on undecaprenyl-pyrophosphoryl-MurNAc-pentapeptide (lipid intermediate I) to form undecaprenyl-pyrophosphoryl-MurNAc-(pentapeptide)GlcNAc (lipid intermediate II). In Campylobacter jejuni (strain RM1221), this protein is UDP-N-acetylglucosamine--N-acetylmuramyl-(pentapeptide) pyrophosphoryl-undecaprenol N-acetylglucosamine transferase.